The sequence spans 344 residues: Oxygen sensor histidine kinase NreB (344 aa).

[4Fe-4S] cluster contacts are provided by C58, C61, C73, and C76. A Histidine kinase domain is found at 147–344 (ENERKRISRE…GTIITLDIPI (198 aa)). Position 158 is a phosphohistidine; by autocatalysis (H158).

It depends on [4Fe-4S] cluster as a cofactor. In terms of processing, autophosphorylated.

The protein localises to the cytoplasm. It catalyses the reaction ATP + protein L-histidine = ADP + protein N-phospho-L-histidine.. Functionally, member of the two-component regulatory system NreB/NreC involved in the control of dissimilatory nitrate/nitrite reduction in response to oxygen. NreB functions as a direct oxygen sensor histidine kinase which is autophosphorylated, in the absence of oxygen, probably at the conserved histidine residue, and transfers its phosphate group probably to a conserved aspartate residue of NreC. NreB/NreC activates the expression of the nitrate (narGHJI) and nitrite (nir) reductase operons, as well as the putative nitrate transporter gene narT. The chain is Oxygen sensor histidine kinase NreB (nreB) from Staphylococcus epidermidis (strain ATCC 12228 / FDA PCI 1200).